A 459-amino-acid chain; its full sequence is Bifunctional protein GlmU (459 aa).

The tract at residues 1–230 is pyrophosphorylase; it reads MSNRFAVILA…FDETLGVNDR (230 aa). Residues 9–12, Lys23, Gln73, and 78–79 each bind UDP-N-acetyl-alpha-D-glucosamine; these read LAAG and GT. Residue Asp103 coordinates Mg(2+). Positions 140, 155, 170, and 228 each coordinate UDP-N-acetyl-alpha-D-glucosamine. Position 228 (Asn228) interacts with Mg(2+). The segment at 231–251 is linker; sequence VALSQAEIIMKNRINRKNMVN. Residues 252 to 459 are N-acetyltransferase; sequence GVTIIDPSNT…VDQLLNKKKS (208 aa). UDP-N-acetyl-alpha-D-glucosamine contacts are provided by Arg333 and Lys351. The Proton acceptor role is filled by His363. UDP-N-acetyl-alpha-D-glucosamine contacts are provided by Tyr366 and Asn377. Acetyl-CoA-binding positions include 386–387, Ala423, and Arg440; that span reads NY.

In the N-terminal section; belongs to the N-acetylglucosamine-1-phosphate uridyltransferase family. This sequence in the C-terminal section; belongs to the transferase hexapeptide repeat family. As to quaternary structure, homotrimer. Mg(2+) is required as a cofactor.

The protein resides in the cytoplasm. It carries out the reaction alpha-D-glucosamine 1-phosphate + acetyl-CoA = N-acetyl-alpha-D-glucosamine 1-phosphate + CoA + H(+). It catalyses the reaction N-acetyl-alpha-D-glucosamine 1-phosphate + UTP + H(+) = UDP-N-acetyl-alpha-D-glucosamine + diphosphate. Its pathway is nucleotide-sugar biosynthesis; UDP-N-acetyl-alpha-D-glucosamine biosynthesis; N-acetyl-alpha-D-glucosamine 1-phosphate from alpha-D-glucosamine 6-phosphate (route II): step 2/2. The protein operates within nucleotide-sugar biosynthesis; UDP-N-acetyl-alpha-D-glucosamine biosynthesis; UDP-N-acetyl-alpha-D-glucosamine from N-acetyl-alpha-D-glucosamine 1-phosphate: step 1/1. It functions in the pathway bacterial outer membrane biogenesis; LPS lipid A biosynthesis. In terms of biological role, catalyzes the last two sequential reactions in the de novo biosynthetic pathway for UDP-N-acetylglucosamine (UDP-GlcNAc). The C-terminal domain catalyzes the transfer of acetyl group from acetyl coenzyme A to glucosamine-1-phosphate (GlcN-1-P) to produce N-acetylglucosamine-1-phosphate (GlcNAc-1-P), which is converted into UDP-GlcNAc by the transfer of uridine 5-monophosphate (from uridine 5-triphosphate), a reaction catalyzed by the N-terminal domain. In Bacillus cereus (strain G9842), this protein is Bifunctional protein GlmU.